The primary structure comprises 208 residues: MARYRGSVCRICRRENLKLFLKGDRCYSDKCAFDRRSYPPGQHGQRRTKISDYGIQLREKQKIKRMYGLTEKQFHLTFKKADHAKGITGTNLLVNLERRLDNVIYRLGFADCRTQARQMVRHNHFTVNGHKVNIPSAQVSIGDTIEVREKSRTVAVITNAMEAVARRGLPQWLELDKANFKGVVNAYPVREDLTMPMQEQLIVELYSK.

Residues 98–159 form the S4 RNA-binding domain; it reads RRLDNVIYRL…KSRTVAVITN (62 aa).

Belongs to the universal ribosomal protein uS4 family. In terms of assembly, part of the 30S ribosomal subunit. Contacts protein S5. The interaction surface between S4 and S5 is involved in control of translational fidelity.

Functionally, one of the primary rRNA binding proteins, it binds directly to 16S rRNA where it nucleates assembly of the body of the 30S subunit. With S5 and S12 plays an important role in translational accuracy. The polypeptide is Small ribosomal subunit protein uS4 (Desulfatibacillum aliphaticivorans).